We begin with the raw amino-acid sequence, 90 residues long: Protein Z600 (90 aa).

A phosphothreonine mark is found at Thr22 and Thr48. The interval 46-65 is disordered; the sequence is PATPSSSGHGKFQTELKKRR.

In terms of assembly, component of the Frs-CycA-Cdk1 complex composed of Z600, CycA and Cdk1. Interacts preferentially with CycA (via C-terminus) but is also able to interact (via C-terminus) with CycE (via C-terminus).

Its subcellular location is the nucleus. Cell cycle regulator that is involved in modulating and adjusting cell proliferation according to the requirements of the developmental program. Interacts with mitotic Cdk1-cyclin complexes to inhibit mitotic entry at the G2/M transition. Likely to function by binding to the hydrophobic patch of cyclins to interfere with the interaction between the complex and certain Cdk1 substrates. At the mid-blastula transition, involved in the cell cycle arrest in G2 of cycle 14 by delaying mitosis and thus reducing cell proliferation allowing cell fate specification and morphogenesis to take place. Acts downstream or in parallel to the checkpoint regulator grp which is also required for the cell cycle pause at cycle 14. During gastrulation, delays mitosis in the ventral region of the embryonic mesoderm thus allowing invagination to be completed before cell division takes place. This is Protein Z600 from Drosophila melanogaster (Fruit fly).